Here is an 89-residue protein sequence, read N- to C-terminus: Small ribosomal subunit protein uS15 (89 aa).

This sequence belongs to the universal ribosomal protein uS15 family. As to quaternary structure, part of the 30S ribosomal subunit. Forms a bridge to the 50S subunit in the 70S ribosome, contacting the 23S rRNA.

In terms of biological role, one of the primary rRNA binding proteins, it binds directly to 16S rRNA where it helps nucleate assembly of the platform of the 30S subunit by binding and bridging several RNA helices of the 16S rRNA. Forms an intersubunit bridge (bridge B4) with the 23S rRNA of the 50S subunit in the ribosome. This chain is Small ribosomal subunit protein uS15, found in Leifsonia xyli subsp. xyli (strain CTCB07).